We begin with the raw amino-acid sequence, 187 residues long: Large ribosomal subunit protein bL9 (187 aa).

Residues 168–187 (EEAPAEEDVAAEETSEAAEA) form a disordered region.

It belongs to the bacterial ribosomal protein bL9 family.

In terms of biological role, binds to the 23S rRNA. The chain is Large ribosomal subunit protein bL9 from Paramagnetospirillum magneticum (strain ATCC 700264 / AMB-1) (Magnetospirillum magneticum).